The chain runs to 218 residues: Uracil-DNA glycosylase (218 aa).

The active-site Proton acceptor is D68.

This sequence belongs to the uracil-DNA glycosylase (UDG) superfamily. UNG family. Homodimer. Interacts with protein OPG148. Component of the Uracil-DNA glycosylase(UDG)-OPG148-polymerase complex; OPG148 and UDG form a heterodimeric processivity factor that associates with OPG71 to form the processive polymerase holoenzyme.

The enzyme catalyses Hydrolyzes single-stranded DNA or mismatched double-stranded DNA and polynucleotides, releasing free uracil.. In terms of biological role, plays an essential role in viral replication as a component of the DNA polymerase processivity factor. Excises uracil residues from the DNA which can arise as a result of misincorporation of dUMP residues by DNA polymerase or due to deamination of cytosine. This Homo sapiens (Human) protein is Uracil-DNA glycosylase (OPG116).